Consider the following 426-residue polypeptide: Serine--tRNA ligase (426 aa).

An L-serine-binding site is contributed by 233–235 (TAE). Position 264–266 (264–266 (RSE)) interacts with ATP. Position 287 (Glu287) interacts with L-serine. 351–354 (EISS) provides a ligand contact to ATP. Residue Ser387 participates in L-serine binding.

It belongs to the class-II aminoacyl-tRNA synthetase family. Type-1 seryl-tRNA synthetase subfamily. Homodimer. The tRNA molecule binds across the dimer.

The protein localises to the cytoplasm. It catalyses the reaction tRNA(Ser) + L-serine + ATP = L-seryl-tRNA(Ser) + AMP + diphosphate + H(+). The catalysed reaction is tRNA(Sec) + L-serine + ATP = L-seryl-tRNA(Sec) + AMP + diphosphate + H(+). It participates in aminoacyl-tRNA biosynthesis; selenocysteinyl-tRNA(Sec) biosynthesis; L-seryl-tRNA(Sec) from L-serine and tRNA(Sec): step 1/1. In terms of biological role, catalyzes the attachment of serine to tRNA(Ser). Is also able to aminoacylate tRNA(Sec) with serine, to form the misacylated tRNA L-seryl-tRNA(Sec), which will be further converted into selenocysteinyl-tRNA(Sec). In Clostridium botulinum (strain Langeland / NCTC 10281 / Type F), this protein is Serine--tRNA ligase.